The chain runs to 427 residues: FAD-dependent monooxygenase OpS4 (427 aa).

A signal peptide spans 1 to 22; the sequence is MGSIREPLHLVVIGGGLAGLSA. Glu-37 provides a ligand contact to FAD. Asn-54 carries an N-linked (GlcNAc...) asparagine glycan. Residues Arg-112, Asp-306, and Ala-319 each coordinate FAD.

This sequence belongs to the paxM FAD-dependent monooxygenase family. FAD is required as a cofactor.

It participates in secondary metabolite biosynthesis. In terms of biological role, FAD-dependent monooxygenase; part of the gene cluster that mediates the biosynthesis of the bibenzoquinone oosporein, a metabolite required for fungal virulence that acts by evading host immunity to facilitate fungal multiplication in insects. The non-reducing polyketide synthase OpS1 produces orsellinic acid by condensing acetyl-CoA with 3 malonyl-CoA units. Orsellinic acid is then hydroxylated to benzenetriol by the hydroxylase OpS4. The intermediate is oxidized either nonenzymatically to 5,5'-dideoxy-oosporein or enzymatically to benzenetetrol by the oxidoreductase OpS7. The latter is further dimerized to oosporein by the catalase OpS5. OpS6 probably functions en route for protecting cells against oxidative stress by scavenging any leaked free radical form of benzenetetrol by activating the thiol group of glutathione. This is FAD-dependent monooxygenase OpS4 from Beauveria bassiana (strain ARSEF 2860) (White muscardine disease fungus).